The following is a 180-amino-acid chain: E3 ubiquitin-protein ligase RNF5 (180 aa).

At A2 the chain carries N-acetylalanine. An RING-type zinc finger spans residues 27–68 (CNICLETAREAVVSVCGHLYCWPCLHQWLETRPERQECPVCK). Residues 79 to 110 (LYGRGSQKPQDPRLKTPPRPQGQRPAPESRGG) form a disordered region. A Phosphoserine modification is found at S84. Residue T94 is modified to Phosphothreonine. S107 is subject to Phosphoserine. The next 2 membrane-spanning stretches (helical) occupy residues 118-138 (GGFH…TTVF) and 160-180 (SWQD…LLSI).

It belongs to the RNF5 family. In terms of assembly, interacts with PXN. Interacts with Salmonella typhimurium sopA. Interacts with JKAMP. Interacts with STING1; the interaction of endogenous proteins is dependent on viral infection. In terms of tissue distribution, widely expressed.

It localises to the cell membrane. It is found in the mitochondrion membrane. Its subcellular location is the endoplasmic reticulum membrane. It carries out the reaction S-ubiquitinyl-[E2 ubiquitin-conjugating enzyme]-L-cysteine + [acceptor protein]-L-lysine = [E2 ubiquitin-conjugating enzyme]-L-cysteine + N(6)-ubiquitinyl-[acceptor protein]-L-lysine.. It participates in protein modification; protein ubiquitination. In terms of biological role, membrane-bound E3 ubiquitin-protein ligase that mediates ubiquitination of target proteins. May function together with E2 ubiquitin-conjugating enzymes UBE2D1/UBCH5A and UBE2D2/UBC4. Mediates ubiquitination of PXN/paxillin,thereby regulating cell motility and localization of PXN/paxillin. Catalyzes ubiquitination of Salmonella type III secreted protein sopA. Mediates the 'Lys-63'-linked polyubiquitination of JKAMP thereby regulating JKAMP function by decreasing its association with components of the proteasome and ERAD; the ubiquitination appears to involve E2 ubiquitin-conjugating enzyme UBE2N. Mediates the 'Lys-48'-linked polyubiquitination of STING1 at 'Lys-150' leading to its proteasomal degradation; the ubiquitination occurs in mitochondria after viral transfection and regulates antiviral responses. Catalyzes ubiquitination and subsequent degradation of ATG4B, thereby inhibiting autophagy. This Homo sapiens (Human) protein is E3 ubiquitin-protein ligase RNF5.